The chain runs to 306 residues: Tricarboxylate transporter FUM11 (306 aa).

Solcar repeat units lie at residues 18–98, 109–195, and 206–292; these read SDTL…YQKL, FGIL…LKQV, and IGTV…VVEG. 6 consecutive transmembrane segments (helical) span residues 24 to 44, 67 to 87, 113 to 133, 170 to 189, 209 to 229, and 267 to 286; these read LVAGSVAGGLEIAITYPAEFA, GLQWYSGCIPFLIGNSVKTSI, LAGFGAGATESLLAVTPSERI, GFWPTTARQSAGSAIRLGSY, VKTFIIGSLAGLITVYLTQPL, and GAVARSLRLVMSGGIVFMVY.

The protein belongs to the mitochondrial carrier (TC 2.A.29) family.

The protein localises to the mitochondrion inner membrane. It functions in the pathway mycotoxin biosynthesis. Its function is as follows. Tricarboxylate transporter; part of the gene cluster that mediates the biosynthesis of fumonisins B1 (FB1), B2 (FB2), B3 (FB3), and B4 (FB4), which are carcinogenic mycotoxins. Within the pathway, FUM11 is involved the addition of the tricarballylic moieties to the carbon backbone. FUM11 makes a tricarboxylic acid precursor available for fumonisin biosynthesis via its export from the mitochondria. The biosynthesis starts with the FUM1-catalyzed carbon chain assembly from one molecule of acetyl-CoA, eight molecules of malonyl-CoA, and two molecules of methionine (in S-adenosyl form). The C18 polyketide chain is released from the enzyme by a nucleophilic attack of a carbanion, which is derived from R-carbon of alanine by decarboxylation, on the carbonyl carbon of polyketide acyl chain. This step is catalyzed by the pyridoxal 5'-phosphate-dependent aminoacyl transferase FUM8. The resultant 3-keto intermediate is then stereospecifically reduced to a 3-hydroxyl product by reductase FUM13. Subsequent oxidations at C-10 by the cytochrome P450 monooxygenase FUM2, C-14 and C-15 by FUM6, FUM12 or FUM15, tricarballylic esterification of the hydroxyl groups on C-14 and C-15 by acyltransferase FUM14, and C-5 hydroxylation by 2-keto-glutarate-dependent dioxygenase FUM3 furnish the biosynthesis of fumonisins. The tricarballylic moieties are most likely derived from the citric acid cycle, and their addition to the carbon backbone may involve FUM7, FUM10, FUM11 and FUM14. The polypeptide is Tricarboxylate transporter FUM11 (Gibberella moniliformis (strain M3125 / FGSC 7600) (Maize ear and stalk rot fungus)).